The chain runs to 202 residues: MSFVVALTGGIASGKTTVANLFHDQFGIDLVDADVIARDVVKPETEGLKAIAAHFGQAILHPDGSLNRAALRERIFAAPNEKAWLNQLLHPMIRQGMRNALTQTTSPYALLIVPLLVENQLQTMADRVLVVDVDEKIQIERTMARDKVSREQAEAILAAQASRAQRLAIADDVLKNDAENQKLLPQITLLHQKYLAMSRQNL.

A DPCK domain is found at 4-201; that stretch reads VVALTGGIAS…QKYLAMSRQN (198 aa). 12-17 contributes to the ATP binding site; the sequence is ASGKTT.

This sequence belongs to the CoaE family.

The protein localises to the cytoplasm. The enzyme catalyses 3'-dephospho-CoA + ATP = ADP + CoA + H(+). It participates in cofactor biosynthesis; coenzyme A biosynthesis; CoA from (R)-pantothenate: step 5/5. Its function is as follows. Catalyzes the phosphorylation of the 3'-hydroxyl group of dephosphocoenzyme A to form coenzyme A. In Vibrio cholerae serotype O1 (strain ATCC 39315 / El Tor Inaba N16961), this protein is Dephospho-CoA kinase.